Reading from the N-terminus, the 159-residue chain is Large ribosomal subunit protein uL30 (159 aa).

This sequence belongs to the universal ribosomal protein uL30 family. Part of the 50S ribosomal subunit.

The protein is Large ribosomal subunit protein uL30 of Aeropyrum pernix (strain ATCC 700893 / DSM 11879 / JCM 9820 / NBRC 100138 / K1).